We begin with the raw amino-acid sequence, 330 residues long: Ferredoxin--NADP reductase (330 aa).

FAD is bound by residues glutamate 35, glutamine 43, tyrosine 48, valine 90, phenylalanine 123, aspartate 285, and threonine 326.

It belongs to the ferredoxin--NADP reductase type 2 family. As to quaternary structure, homodimer. The cofactor is FAD.

The catalysed reaction is 2 reduced [2Fe-2S]-[ferredoxin] + NADP(+) + H(+) = 2 oxidized [2Fe-2S]-[ferredoxin] + NADPH. The chain is Ferredoxin--NADP reductase from Streptococcus agalactiae serotype Ia (strain ATCC 27591 / A909 / CDC SS700).